The following is a 1235-amino-acid chain: N-acetylglucosamine-1-phosphotransferase subunits alpha/beta (1235 aa).

A helical transmembrane segment spans residues 22 to 42 (VCFVGVVVTIVSAFQFGEVVL). N-linked (GlcNAc...) asparagine glycans are attached at residues N83, N114, N148, and N179. Intrachain disulfides connect C438/C461, C452/C468, C505/C528, and C519/C535. 2 LNR repeats span residues 438 to 473 (CAEG…GNTA) and 505 to 545 (CNQG…ELYK). Residues D449, D464, D467, D516, D531, and D534 each coordinate Ca(2+). N-linked (GlcNAc...) asparagine glycosylation is found at N614 and N729. The 125-residue stretch at 699–823 (NISLLPKEAQ…AQPTLGVTVS (125 aa)) folds into the DMAP1-binding domain. 2 disordered regions span residues 751–783 (QART…HRSE) and 830–850 (LIVP…AEGN). Residues 837–848 (HLPKEEESDRAE) are compositionally biased toward basic and acidic residues. The 36-residue stretch at 984 to 1019 (VQPLNISQVFHEVDTDQSGVLSDREIRTLATRIHDL) folds into the EF-hand domain. An N-linked (GlcNAc...) asparagine glycan is attached at N988. 4 residues coordinate Ca(2+): D997, D999, S1001, and E1008. A glycan (N-linked (GlcNAc...) asparagine) is linked at N1108. A helical membrane pass occupies residues 1194–1214 (VLATLIIFTIFSFFAEQIIAL).

It belongs to the stealth family. Hexamer of two alpha, two beta and two gamma (GNPTG) subunits; disulfide-linked. The alpha and/or the beta subunits of the enzyme constitute the catalytic subunits. Interacts with LYSET; facilitates proper localization of GNPTAB. The alpha- and beta-subunits are generated by a proteolytic cleavage by MBTPS1 protease at the Lys-907-Asp-908 bond.

The protein localises to the golgi apparatus membrane. It carries out the reaction N(4)-[alpha-D-mannosyl-(1-&gt;2)-alpha-D-mannosyl-(glycan)]-L-asparaginyl-[protein] + UDP-N-acetyl-alpha-D-glucosamine = N(4)-[6-(N-acetyl-alpha-D-glucosaminyl-1-phospho)-alpha-D-mannosyl-(1-&gt;2)-alpha-D-mannosyl-(glycan)]-L-asparaginyl-[protein] + UMP + H(+). Functionally, catalyzes the formation of mannose 6-phosphate (M6P) markers on high mannose type oligosaccharides in the Golgi apparatus. M6P residues are required to bind to the M6P receptors (MPR), which mediate the vesicular transport of lysosomal enzymes to the endosomal/prelysosomal compartment. This chain is N-acetylglucosamine-1-phosphotransferase subunits alpha/beta (Gnptab), found in Mus musculus (Mouse).